The following is a 253-amino-acid chain: uncharacterized protein (253 aa).

Residues Ile-17, Ser-36, Asp-62, Asn-89, Tyr-158, Lys-162, Val-191, and Thr-193 each coordinate NADP(+). The Proton donor role is filled by Tyr-158. Lys-162 serves as the catalytic Lowers pKa of active site Tyr.

The protein belongs to the short-chain dehydrogenases/reductases (SDR) family.

It is found in the cytoplasm. Its subcellular location is the nucleus. This is an uncharacterized protein from Schizosaccharomyces pombe (strain 972 / ATCC 24843) (Fission yeast).